The primary structure comprises 538 residues: MKTSEERLVVPDSLSSDQAPAPVPQGSPVDENTDSEPVPQPCGGDDRSQVAADSVAGSVVFQEPQQGHPLPLSAPLEVEFNTPGELSPRIEEQELSENVSLPVEDTNQPELASGEDVEGVSEEPGPVDEGDAFWSYNFSQVPRYLSGSWSEFRAHSENFLKGCKWAPDGSCILTNSADNTLRIYNLPPELYSATEQVDYAEMVPVLRMVEGDTIYDYCWYSLMSSSQPDTSYVASSSRENPIHIWDAFTGELRASFRAYNHLDELTAAHSLCFSPDGSQLFCGFNRTVRVFSTSRPGRDCEVRATFAKKQGQSGIISCIAFSPSQPLYACGSYGRTLGLYAWDDGSPLALLGGHQGGITHLCFHPDGNLFFSGARKDAELLCWDLRQPGHLLWSLSREVTTNQRIYFDLDPSGQFLVSGNTNGMVSVWDISGAFGDSSKLGPVMTFLPQKDCTNGVSLHPSLPLLATASGQRMFPEPTNSGDEGEPEGDLPLLSLCHAHPEWQLQLWWCGGGPDPSSPNDPQDEKGQGRAEGCGDGLI.

The disordered stretch occupies residues Met-1 to Asp-53. Phosphoserine occurs at positions 27 and 87. The segment at Glu-92 to Asp-128 is disordered. Residues Ser-113–Asp-128 show a composition bias toward acidic residues. 6 WD repeats span residues Ala-154–Thr-194, Glu-210–Ser-255, Asn-260–Glu-301, Gly-311–Gly-352, Gly-353–Trp-393, and Val-399–Ser-438. 2 disordered regions span residues Gln-471–Pro-491 and Cys-509–Ile-538. The residue at position 478 (Thr-478) is a Phosphothreonine. At Ser-480 the chain carries Phosphoserine. Positions Arg-529–Ile-538 are enriched in gly residues.

It belongs to the TCAB1 family. Component of the telomerase holoenzyme complex composed of one molecule of TERT, one molecule of WRAP53/TCAB1, two molecules of H/ACA ribonucleoprotein complex subunits DKC1, NOP10, NHP2 and GAR1, and a telomerase RNA template component (TERC). The telomerase holoenzyme complex is associated with TEP1, SMG6/EST1A and POT1. Interacts with the chaperonin-containing T-complex (TRiC) complex; which mediates the folding of WRAP53/TCAB1. Interacts with COIL. Interacts with SMN1. Interacts with RNF8. Interacts with histone H2AX. As to expression, preferentially expressed in testis.

Its subcellular location is the nucleus. The protein localises to the cajal body. It is found in the chromosome. The protein resides in the telomere. Its function is as follows. RNA chaperone that plays a key role in telomere maintenance and RNA localization to Cajal bodies. Specifically recognizes and binds the Cajal body box (CAB box) present in both small Cajal body RNAs (scaRNAs) and telomerase RNA template component (TERC). Essential component of the telomerase holoenzyme complex, a ribonucleoprotein complex essential for the replication of chromosome termini that elongates telomeres in most eukaryotes. In the telomerase holoenzyme complex, required to stimulate the catalytic activity of the complex. Acts by specifically binding the CAB box of the TERC RNA and controlling the folding of the CR4/CR5 region of the TERC RNA, a critical step for telomerase activity. In addition, also controls telomerase holoenzyme complex localization to Cajal body. During S phase, required for delivery of TERC to telomeres during S phase and for telomerase activity. In addition to its role in telomere maintenance, also required for Cajal body formation, probably by mediating localization of scaRNAs to Cajal bodies. Also plays a role in DNA repair: relocalizes to sites of DNA double-strand breaks in response to DNA damage and promotes the repair of DNA double-strand breaks. Acts by recruiting the ubiquitin ligase RNF8 to DNA breaks and promote both homologous recombination (HR) and non-homologous end joining (NHEJ). This is Telomerase Cajal body protein 1 from Mesocricetus auratus (Golden hamster).